The sequence spans 93 residues: Bombyxin B-11 (93 aa).

Residues 1–22 (MMKTAVMFILVVVISLTYSSEE) form the signal peptide. Cystine bridges form between cysteine 30–cysteine 75, cysteine 42–cysteine 92, and cysteine 74–cysteine 79. Residues 49 to 64 (GGAQYAPYWQETYLRS) constitute a propeptide, bombyxin B-11 C peptide.

Belongs to the insulin family. In terms of assembly, heterodimer of a B chain and an A chain linked by two disulfide bonds.

Its subcellular location is the secreted. Brain peptide responsible for activation of prothoracic glands to produce ecdysone in insects. This chain is Bombyxin B-11 (BBXB11), found in Bombyx mori (Silk moth).